Reading from the N-terminus, the 740-residue chain is Elongation factor 2 (740 aa).

Residues 23 to 264 (AQIRNAGTLA…MIIEHVPPPN (242 aa)) form the tr-type G domain. GTP is bound by residues 32-39 (AHVDHGKT), 98-102 (DTPGH), and 152-155 (NKID). Histidine 605 is modified (diphthamide).

It belongs to the TRAFAC class translation factor GTPase superfamily. Classic translation factor GTPase family. EF-G/EF-2 subfamily.

Its subcellular location is the cytoplasm. In terms of biological role, catalyzes the GTP-dependent ribosomal translocation step during translation elongation. During this step, the ribosome changes from the pre-translocational (PRE) to the post-translocational (POST) state as the newly formed A-site-bound peptidyl-tRNA and P-site-bound deacylated tRNA move to the P and E sites, respectively. Catalyzes the coordinated movement of the two tRNA molecules, the mRNA and conformational changes in the ribosome. The sequence is that of Elongation factor 2 from Pyrobaculum arsenaticum (strain DSM 13514 / JCM 11321 / PZ6).